Reading from the N-terminus, the 569-residue chain is Peroxisomal targeting signal receptor (569 aa).

A Glycyl cysteine thioester (Cys-Gly) (interchain with G-Cter in ubiquitin) cross-link involves residue cysteine 5. The tract at residues 6 to 28 is amphipathic helix 1 (AH1); it reads SVGANPLAQLNKRVQQDRTLQHG. Residue lysine 17 forms a Glycyl lysine isopeptide (Lys-Gly) (interchain with G-Cter in ubiquitin) linkage. Residues 53–71 form an amphipathic helix 2 (AH2) region; it reads KFQMEQFMAGKASSGGNMF. A WxxxF/Y motif 1 motif is present at residues 112 to 116; sequence WSQEF. The interval 150–154 is amphipathic helix 3 (AH3); it reads PMNMM. Residues 181-185 carry the WxxxF/Y motif 2 motif; that stretch reads WEQQF. Residues 229–245 are amphipathic helix 4 (AH4); the sequence is FQQIWNDIHDQTDDLDS. TPR repeat units follow at residues 281–315, 316–349, 417–450, 452–484, and 486–518; these read NTDA…DPGH, VDAW…DPHN, PDVQ…RPDD, CMWN…KPTF, and RARY…HEVE.

Belongs to the peroxisomal targeting signal receptor family. As to quaternary structure, interacts (via WxxxF/Y and LVxEF motifs) with PEX14; promoting translocation through the PEX13-PEX14 docking complex. Monoubiquitinated at Cys-5 by PEX2 during PEX5 passage through the retrotranslocation channel: monoubiquitination acts as a signal for PEX5 extraction and is required for proper export from peroxisomes and recycling. When PEX5 recycling is compromised, polyubiquitinated at Lys-17 by PEX10 during its passage through the retrotranslocation channel, leading to its degradation.

Its subcellular location is the cytoplasm. It localises to the cytosol. The protein resides in the peroxisome matrix. In terms of biological role, receptor that mediates peroxisomal import of proteins containing a C-terminal PTS1-type tripeptide peroxisomal targeting signal (SKL-type). Binds to cargo proteins containing a PTS1 peroxisomal targeting signal in the cytosol, and translocates them into the peroxisome matrix by passing through the PEX13-PEX14 docking complex along with cargo proteins. PEX5 receptor is then retrotranslocated into the cytosol, leading to release of bound cargo in the peroxisome matrix, and reset for a subsequent peroxisome import cycle. The polypeptide is Peroxisomal targeting signal receptor (PEX5) (Eremothecium gossypii (strain ATCC 10895 / CBS 109.51 / FGSC 9923 / NRRL Y-1056) (Yeast)).